The following is a 273-amino-acid chain: Large ribosomal subunit protein uL2 (273 aa).

Disordered regions lie at residues 28–53 (KPFA…TTRH) and 221–273 (RGTA…RRTK). The segment covering 39-48 (KSGGRNNNGR) has biased composition (low complexity).

This sequence belongs to the universal ribosomal protein uL2 family. Part of the 50S ribosomal subunit. Forms a bridge to the 30S subunit in the 70S ribosome.

Its function is as follows. One of the primary rRNA binding proteins. Required for association of the 30S and 50S subunits to form the 70S ribosome, for tRNA binding and peptide bond formation. It has been suggested to have peptidyltransferase activity; this is somewhat controversial. Makes several contacts with the 16S rRNA in the 70S ribosome. The protein is Large ribosomal subunit protein uL2 of Pectobacterium atrosepticum (strain SCRI 1043 / ATCC BAA-672) (Erwinia carotovora subsp. atroseptica).